The following is a 640-amino-acid chain: 1,4-alpha-glucan branching enzyme GlgB (640 aa).

Asp-317 serves as the catalytic Nucleophile. The Proton donor role is filled by Glu-370.

Belongs to the glycosyl hydrolase 13 family. GlgB subfamily. Monomer.

It carries out the reaction Transfers a segment of a (1-&gt;4)-alpha-D-glucan chain to a primary hydroxy group in a similar glucan chain.. It functions in the pathway glycan biosynthesis; glycogen biosynthesis. Catalyzes the formation of the alpha-1,6-glucosidic linkages in glycogen by scission of a 1,4-alpha-linked oligosaccharide from growing alpha-1,4-glucan chains and the subsequent attachment of the oligosaccharide to the alpha-1,6 position. The sequence is that of 1,4-alpha-glucan branching enzyme GlgB from Nitratidesulfovibrio vulgaris (strain ATCC 29579 / DSM 644 / CCUG 34227 / NCIMB 8303 / VKM B-1760 / Hildenborough) (Desulfovibrio vulgaris).